A 92-amino-acid polypeptide reads, in one-letter code: Probable glutathione transferase (92 aa).

Residues 1–71 (RTCPYAQRAR…YLEEAFPDPP (71 aa)) enclose the GST N-terminal domain. The active-site Nucleophile is Cys-3. Glutathione contacts are provided by residues Lys-30, Val-43, and 55–56 (ES).

This sequence belongs to the GST superfamily. Omega family.

It catalyses the reaction RX + glutathione = an S-substituted glutathione + a halide anion + H(+). The catalysed reaction is L-dehydroascorbate + 2 glutathione = glutathione disulfide + L-ascorbate. It carries out the reaction methylarsonate + 2 glutathione + H(+) = methylarsonous acid + glutathione disulfide + H2O. Exhibits glutathione-dependent thiol transferase activity. Has dehydroascorbate reductase activity and may contribute to the recycling of ascorbic acid. Participates in the biotransformation of inorganic arsenic and reduces monomethylarsonic acid (MMA). The polypeptide is Probable glutathione transferase (Aplysia californica (California sea hare)).